We begin with the raw amino-acid sequence, 1082 residues long: M cell-type agglutination protein mam3 (1082 aa).

A signal peptide spans 1–18 (MSIALAFFILVLLGFSWA). N-linked (GlcNAc...) asparagine glycosylation is found at Asn-28, Asn-56, and Asn-82. Positions 353 to 374 (TSSSSTDQLTSASPISSSVISP) are disordered. Asn-451, Asn-475, Asn-495, Asn-520, Asn-548, Asn-588, Asn-613, and Asn-638 each carry an N-linked (GlcNAc...) asparagine glycan. A run of 11 repeats spans residues 646-681 (QTTT…VPTP), 682-717 (SWIT…IPTP), 718-753 (SWVT…VPTP), 754-789 (SWVT…IPTP), 790-825 (SWVT…IPTP), 826-861 (SWVT…VPTP), 862-897 (SWVT…IPTP), 898-933 (SWVT…IPTP), 934-969 (SWVT…IPTP), 970-1005 (SWVT…IPTP), and 1006-1041 (SWVT…IPQQ). The tract at residues 720–1043 (VTETVTSGSI…VLVDIPQQHA (324 aa)) is 11 X 36 AA approximate tandem repeats.

This sequence belongs to the mam3/map4 family.

It is found in the cell surface. M cell-type specific protein involved in agglutination during conjugation. In Schizosaccharomyces pombe (strain 972 / ATCC 24843) (Fission yeast), this protein is M cell-type agglutination protein mam3.